The chain runs to 295 residues: Cytidine deaminase (295 aa).

CMP/dCMP-type deaminase domains follow at residues 48 to 168 and 187 to 295; these read EDAD…FGPA and DDDE…YLSL. Residue 89–91 participates in substrate binding; it reads NME. Residue His102 coordinates Zn(2+). Residue Glu104 is the Proton donor of the active site. Residues Cys129 and Cys132 each coordinate Zn(2+).

It belongs to the cytidine and deoxycytidylate deaminase family. Homodimer. The cofactor is Zn(2+).

It carries out the reaction cytidine + H2O + H(+) = uridine + NH4(+). The enzyme catalyses 2'-deoxycytidine + H2O + H(+) = 2'-deoxyuridine + NH4(+). This enzyme scavenges exogenous and endogenous cytidine and 2'-deoxycytidine for UMP synthesis. The chain is Cytidine deaminase from Vibrio cholerae serotype O1 (strain ATCC 39315 / El Tor Inaba N16961).